Consider the following 340-residue polypeptide: ATPase get3 (340 aa).

Residue 34-41 (KGGVGKTT) coordinates ATP. Residue Asp63 is part of the active site. Residues Glu242 and Asn269 each contribute to the ATP site. 2 residues coordinate Zn(2+): Cys280 and Cys283.

The protein belongs to the arsA ATPase family. As to quaternary structure, homodimer.

The protein localises to the cytoplasm. It is found in the endoplasmic reticulum. Functionally, ATPase required for the post-translational delivery of tail-anchored (TA) proteins to the endoplasmic reticulum. Recognizes and selectively binds the transmembrane domain of TA proteins in the cytosol. This complex then targets to the endoplasmic reticulum by membrane-bound receptors, where the tail-anchored protein is released for insertion. This process is regulated by ATP binding and hydrolysis. ATP binding drives the homodimer towards the closed dimer state, facilitating recognition of newly synthesized TA membrane proteins. ATP hydrolysis is required for insertion. Subsequently, the homodimer reverts towards the open dimer state, lowering its affinity for the membrane-bound receptor, and returning it to the cytosol to initiate a new round of targeting. This Sclerotinia sclerotiorum (strain ATCC 18683 / 1980 / Ss-1) (White mold) protein is ATPase get3 (get3).